A 228-amino-acid polypeptide reads, in one-letter code: Uracil-DNA glycosylase (228 aa).

The Proton acceptor role is filled by aspartate 64.

This sequence belongs to the uracil-DNA glycosylase (UDG) superfamily. UNG family.

It localises to the cytoplasm. It catalyses the reaction Hydrolyzes single-stranded DNA or mismatched double-stranded DNA and polynucleotides, releasing free uracil.. In terms of biological role, excises uracil residues from the DNA which can arise as a result of misincorporation of dUMP residues by DNA polymerase or due to deamination of cytosine. This chain is Uracil-DNA glycosylase, found in Pectobacterium carotovorum subsp. carotovorum (strain PC1).